The primary structure comprises 311 residues: Cytosolic Fe-S cluster assembly factor Nubp1 homolog (311 aa).

[4Fe-4S] cluster contacts are provided by cysteine 9, cysteine 23, cysteine 26, and cysteine 32. Residue 63–70 (GKGGVGKS) coordinates ATP. Residues cysteine 240 and cysteine 243 each contribute to the [4Fe-4S] cluster site.

The protein belongs to the Mrp/NBP35 ATP-binding proteins family. NUBP1/NBP35 subfamily. As to quaternary structure, heterotetramer of 2 Nubp1 and 2 Nubp2 chains. It depends on [4Fe-4S] cluster as a cofactor.

The protein resides in the cytoplasm. In terms of biological role, component of the cytosolic iron-sulfur (Fe/S) protein assembly (CIA) machinery. Required for maturation of extramitochondrial Fe-S proteins. The Nubp1-Nubp2 heterotetramer forms a Fe-S scaffold complex, mediating the de novo assembly of an Fe-S cluster and its transfer to target apoproteins. In Drosophila yakuba (Fruit fly), this protein is Cytosolic Fe-S cluster assembly factor Nubp1 homolog.